A 155-amino-acid chain; its full sequence is uncharacterized protein (155 aa).

Helical transmembrane passes span 4–24, 46–66, 77–97, 101–121, and 130–150; these read IVGA…AGYL, AIGI…AIVY, FWFT…FQFT, LLAA…LLII, and SYLL…SFTI.

It belongs to the TspO/BZRP family.

Its subcellular location is the cell membrane. This is an uncharacterized protein from Bacillus subtilis (strain 168).